The primary structure comprises 282 residues: Phospholipid phosphatase 1 (282 aa).

Residues 1–6 (MFDKPR) lie on the Cytoplasmic side of the membrane. Residues 5 to 7 (PRL) carry the PDZ-binding; involved in localization to the apical cell membrane motif. A helical membrane pass occupies residues 7–27 (LPYVVLDVICVLLAGLPFIIL). The Extracellular portion of the chain corresponds to 28–53 (TSRHTPFQRGVFCTDESIKYPYREDT). The chain crosses the membrane as a helical span at residues 54–74 (IPYALLGGIVIPFCIIVMITG). The Cytoplasmic portion of the chain corresponds to 75 to 88 (ETLSVYFNVLHSNS). A helical membrane pass occupies residues 89–109 (FVSNHYIATIYKAVGAFLFGA). Topologically, residues 110 to 164 (SASQSLTDIAKYSIGRLRPHFLAVCNPDWSKINCSDGYIENFVCQGNEQKVREGR) are extracellular. The tract at residues 120–128 (KYSIGRLRP) is phosphatase sequence motif I. N-linked (GlcNAc...) asparagine glycosylation is present at Asn142. Residues 165–185 (LSFYSGHSSFSMYCMLFVALY) form a helical membrane-spanning segment. The tract at residues 168–171 (YSGH) is phosphatase sequence motif II. The Proton donors role is filled by His171. Topologically, residues 186-194 (LQARMKGDW) are cytoplasmic. Residues 195–215 (ARLLRPMLQFGLVALSIYVGL) traverse the membrane as a helical segment. A phosphatase sequence motif III region spans residues 216 to 227 (SRVSDYKHHWSD). Over 216 to 229 (SRVSDYKHHWSDVL) the chain is Extracellular. The active-site Nucleophile is the His223. The helical transmembrane segment at 230–250 (IGLIQGAVVAILVVLYVTDFF) threads the bilayer. The Cytoplasmic portion of the chain corresponds to 251-282 (KTTESNKERKEDSHTTLHETTNRQSYARNHEP). Positions 257-271 (KERKEDSHTTLHETT) are enriched in basic and acidic residues. Residues 257 to 282 (KERKEDSHTTLHETTNRQSYARNHEP) are disordered. The segment covering 272 to 282 (NRQSYARNHEP) has biased composition (polar residues).

This sequence belongs to the PA-phosphatase related phosphoesterase family. Forms functional homodimers and homooligomers that are not required for substrate recognition and catalytic activity. Can also form heterooligomers with PLPP2 and PLPP3. Post-translationally, N-glycosylated. N-linked sugars are of the complex type. N-glycosylation is not required for the phosphatase activity.

The protein localises to the cell membrane. It localises to the apical cell membrane. It is found in the membrane raft. The protein resides in the membrane. Its subcellular location is the caveola. It catalyses the reaction a 1,2-diacyl-sn-glycero-3-phosphate + H2O = a 1,2-diacyl-sn-glycerol + phosphate. The catalysed reaction is 1,2-dihexadecanoyl-sn-glycero-3-phosphate + H2O = 1,2-dihexadecanoyl-sn-glycerol + phosphate. It carries out the reaction 1,2-di-(9Z-octadecenoyl)-sn-glycero-3-phosphate + H2O = 1,2-di-(9Z-octadecenoyl)-sn-glycerol + phosphate. The enzyme catalyses a monoacyl-sn-glycero-3-phosphate + H2O = a monoacylglycerol + phosphate. It catalyses the reaction (9Z)-octadecenoyl-sn-glycero-3-phosphate + H2O = (9Z-octadecenoyl)-glycerol + phosphate. The catalysed reaction is a 1-acyl-sn-glycero-3-phosphate + H2O = a 1-acyl-sn-glycerol + phosphate. It carries out the reaction 1-(9Z-octadecenoyl)-sn-glycero-3-phosphate + H2O = 1-(9Z-octadecenoyl)-sn-glycerol + phosphate. The enzyme catalyses a 1,2-diacyl-sn-glycerol 3-diphosphate + H2O = a 1,2-diacyl-sn-glycero-3-phosphate + phosphate + H(+). It catalyses the reaction sphing-4-enine 1-phosphate + H2O = sphing-4-enine + phosphate. The catalysed reaction is an N-acylsphing-4-enine 1-phosphate + H2O = an N-acylsphing-4-enine + phosphate. It carries out the reaction N-(octanoyl)-sphing-4-enine-1-phosphate + H2O = N-octanoylsphing-4-enine + phosphate. The enzyme catalyses N-(9Z-octadecenoyl)-ethanolamine phosphate + H2O = N-(9Z-octadecenoyl) ethanolamine + phosphate. It catalyses the reaction 1-hexadecanoyl-2-(9Z-octadecenoyl)-sn-glycero-3-phosphate + H2O = 1-hexadecanoyl-2-(9Z-octadecenoyl)-sn-glycerol + phosphate. It functions in the pathway lipid metabolism; phospholipid metabolism. Its activity is regulated as follows. Magnesium-independent phospholipid phosphatase. Insensitive to N-ethylmaleimide. In terms of biological role, magnesium-independent phospholipid phosphatase of the plasma membrane that catalyzes the dephosphorylation of a variety of glycerolipid and sphingolipid phosphate esters including phosphatidate/PA, lysophosphatidate/LPA, diacylglycerol pyrophosphate/DGPP, sphingosine 1-phosphate/S1P and ceramide 1-phosphate/C1P. Also acts on N-oleoyl ethanolamine phosphate/N-(9Z-octadecenoyl)-ethanolamine phosphate, a potential physiological compound. Through its extracellular phosphatase activity allows both the hydrolysis and the cellular uptake of these bioactive lipid mediators from the milieu, regulating signal transduction in different cellular processes. It is for instance essential for the extracellular hydrolysis of S1P and subsequent conversion into intracellular S1P. Involved in the regulation of inflammation, platelets activation, cell proliferation and migration among other processes. May also have an intracellular activity to regulate phospholipid-mediated signaling pathways. In Rattus norvegicus (Rat), this protein is Phospholipid phosphatase 1.